The sequence spans 321 residues: NADPH-dependent codeinone reductase 1-1 (321 aa).

Residues Thr-27 and Asp-51 each contribute to the NADPH site. Residues Tyr-56 and His-119 each act as proton donor in the active site. His-119 lines the substrate pocket. Positions 187, 214, 216, 264, and 269 each coordinate NADPH.

The protein belongs to the aldo/keto reductase family. In terms of tissue distribution, latex secreting cells (laticifer cells). Expressed constitutively and ubiquitously with highest levels in capsules. Restricted to the parietal region of sieve elements adjacent or proximal to laticifers in roots, stems, leaves and carpels.

The protein resides in the cytoplasm. The protein localises to the cytosol. It catalyses the reaction codeine + NADP(+) = codeinone + NADPH + H(+). The catalysed reaction is neopine + NADP(+) = neopinone + NADPH + H(+). It carries out the reaction morphine + NADP(+) = morphinone + NADPH + H(+). The enzyme catalyses neomorphine + NADP(+) = neomorphinone + NADPH + H(+). It participates in alkaloid biosynthesis; morphine biosynthesis. In terms of biological role, NADPH-dependent reductase involved in biosynthesis of morphinan-type benzylisoquinoline and opiate alkaloids natural products. Reduces codeinone to codeine in the penultimate step in morphine biosynthesis. Can use morphinone, hydrocodone and hydromorphone as substrate during reductive reaction with NADPH as cofactor, and morphine and dihydrocodeine as substrate during oxidative reaction with NADP as cofactor. Converts morphinone to morphine, and neomorphinone to neomorphine. Reduces irreversibly neopinone, a spontaneous isomer of codeinone, to neopine; in planta, neopine levels are limited to low levels. This chain is NADPH-dependent codeinone reductase 1-1, found in Papaver somniferum (Opium poppy).